A 318-amino-acid chain; its full sequence is Isoaspartyl peptidase/L-asparaginase (318 aa).

Residue Thr-180 is the Nucleophile of the active site. Substrate-binding positions include 208–211 (RVSD) and 229–232 (TGIG).

It belongs to the Ntn-hydrolase family. As to quaternary structure, heterotetramer of two alpha and two beta chains arranged as a dimer of alpha/beta heterodimers. In terms of processing, cleaved into an alpha and beta chain by autocatalysis; this activates the enzyme. The N-terminal residue of the beta subunit is responsible for the nucleophile hydrolase activity.

It catalyses the reaction Cleavage of a beta-linked Asp residue from the N-terminus of a polypeptide.. Degrades proteins damaged by L-isoaspartyl residue formation (also known as beta-Asp residues). Probably performs the final step in the degradation of the reserve polymer cyanophycin (depolymerizes the building block L-beta-Asp-Arg). Also has L-asparaginase activity. This is Isoaspartyl peptidase/L-asparaginase from Nostoc sp. (strain PCC 7120 / SAG 25.82 / UTEX 2576).